The chain runs to 493 residues: Ketol-acid reductoisomerase (NADP(+)) (493 aa).

One can recognise a KARI N-terminal Rossmann domain in the interval 17 to 208 (LSQCRFMDRS…GGDRAGVLHS (192 aa)). NADP(+)-binding positions include 45-48 (CGAQ), Arg68, Arg76, Ser78, and 108-110 (DKQ). His132 is a catalytic residue. NADP(+) is bound at residue Gly158. KARI C-terminal knotted domains follow at residues 209–344 (SFIA…NAPS) and 345–486 (SNEH…MKDM). The Mg(2+) site is built by Asp217, Glu221, Glu389, and Glu393. Residue Ser414 coordinates substrate.

Belongs to the ketol-acid reductoisomerase family. Mg(2+) serves as cofactor.

The catalysed reaction is (2R)-2,3-dihydroxy-3-methylbutanoate + NADP(+) = (2S)-2-acetolactate + NADPH + H(+). It carries out the reaction (2R,3R)-2,3-dihydroxy-3-methylpentanoate + NADP(+) = (S)-2-ethyl-2-hydroxy-3-oxobutanoate + NADPH + H(+). The protein operates within amino-acid biosynthesis; L-isoleucine biosynthesis; L-isoleucine from 2-oxobutanoate: step 2/4. Its pathway is amino-acid biosynthesis; L-valine biosynthesis; L-valine from pyruvate: step 2/4. In terms of biological role, involved in the biosynthesis of branched-chain amino acids (BCAA). Catalyzes an alkyl-migration followed by a ketol-acid reduction of (S)-2-acetolactate (S2AL) to yield (R)-2,3-dihydroxy-isovalerate. In the isomerase reaction, S2AL is rearranged via a Mg-dependent methyl migration to produce 3-hydroxy-3-methyl-2-ketobutyrate (HMKB). In the reductase reaction, this 2-ketoacid undergoes a metal-dependent reduction by NADPH to yield (R)-2,3-dihydroxy-isovalerate. The polypeptide is Ketol-acid reductoisomerase (NADP(+)) (Shewanella amazonensis (strain ATCC BAA-1098 / SB2B)).